The primary structure comprises 169 residues: Thaumatin-like pathogenesis-related protein 3 (169 aa).

A signal peptide spans 1 to 21; that stretch reads MATSSAVLFLLLAVFAAGASA.

It belongs to the thaumatin family.

In terms of biological role, associated with resistance against stem rust fungi. This is Thaumatin-like pathogenesis-related protein 3 (RASTL-3) from Avena sativa (Oat).